Here is a 102-residue protein sequence, read N- to C-terminus: Serum amyloid A-5 protein (102 aa).

The tract at residues 68 to 102 (GRGHEDSMADQEANRWGRSGNDPNHYRPAGLPDKY) is disordered. Positions 69-82 (RGHEDSMADQEANR) are enriched in basic and acidic residues.

Belongs to the SAA family. Expressed by the liver; secreted in plasma.

Its subcellular location is the secreted. Functionally, major acute phase reactant. Apolipoprotein of the HDL complex. This is Serum amyloid A-5 protein from Mesocricetus auratus (Golden hamster).